The following is a 258-amino-acid chain: Eukaryotic translation initiation factor 3 subunit J (258 aa).

Low complexity predominate over residues 1 to 11; that stretch reads MAAAAAAAGDS. A disordered region spans residues 1–108; that stretch reads MAAAAAAAGD…LEEPEEPKVL (108 aa). Ala-2 is subject to N-acetylalanine. The interval 2–69 is sufficient for interaction with EIF3B; the sequence is AAAAAAAGDS…KEEAEVKPEV (68 aa). Residues Ser-11, Ser-13, and Ser-20 each carry the phosphoserine modification. Residues 40–59 are compositionally biased toward acidic residues; that stretch reads EGEDEDEDVKDNWDDDDDEK. Residues 60–106 are compositionally biased toward basic and acidic residues; it reads KEEAEVKPEVKISEKKKIAEKIKEKERQQKKRQEEIKKRLEEPEEPK. The stretch at 70–135 forms a coiled coil; sequence KISEKKKIAE…ESDLELAKET (66 aa). Lys-106 is covalently cross-linked (Glycyl lysine isopeptide (Lys-Gly) (interchain with G-Cter in SUMO2)). Thr-109 is modified (phosphothreonine). Residue Ser-127 is modified to Phosphoserine. The disordered stretch occupies residues 217 to 238; it reads SKAKKKKKGVVPGGGLKATMKD. The promotes stable association with the 40S ribosome stretch occupies residues 243–258; that stretch reads YGGYDGGYVQDYEDFM. Tyr-254 carries the phosphotyrosine modification.

As to quaternary structure, component of the eukaryotic translation initiation factor 3 (eIF-3) complex, which is composed of 13 subunits: EIF3A, EIF3B, EIF3C, EIF3D, EIF3E, EIF3F, EIF3G, EIF3H, EIF3I, EIF3J, EIF3K, EIF3L and EIF3M. The eIF-3 complex appears to include 3 stable modules: module A is composed of EIF3A, EIF3B, EIF3G and EIF3I; module B is composed of EIF3F, EIF3H, and EIF3M; and module C is composed of EIF3C, EIF3D, EIF3E, EIF3K and EIF3L. EIF3C of module C binds EIF3B of module A and EIF3H of module B, thereby linking the three modules. EIF3J is a labile subunit that binds to the eIF-3 complex via EIF3B. The eIF-3 complex interacts with RPS6KB1 under conditions of nutrient depletion. Mitogenic stimulation leads to binding and activation of a complex composed of MTOR and RPTOR, leading to phosphorylation and release of RPS6KB1 and binding of EIF4B to eIF-3. Post-translationally, phosphorylated. Phosphorylation is enhanced upon serum stimulation.

The protein localises to the cytoplasm. Functionally, component of the eukaryotic translation initiation factor 3 (eIF-3) complex, which is required for several steps in the initiation of protein synthesis. The eIF-3 complex associates with the 40S ribosome and facilitates the recruitment of eIF-1, eIF-1A, eIF-2:GTP:methionyl-tRNAi and eIF-5 to form the 43S pre-initiation complex (43S PIC). The eIF-3 complex stimulates mRNA recruitment to the 43S PIC and scanning of the mRNA for AUG recognition. The eIF-3 complex is also required for disassembly and recycling of post-termination ribosomal complexes and subsequently prevents premature joining of the 40S and 60S ribosomal subunits prior to initiation. The eIF-3 complex specifically targets and initiates translation of a subset of mRNAs involved in cell proliferation, including cell cycling, differentiation and apoptosis, and uses different modes of RNA stem-loop binding to exert either translational activation or repression. The sequence is that of Eukaryotic translation initiation factor 3 subunit J from Homo sapiens (Human).